The sequence spans 666 residues: tRNA 5-methylaminomethyl-2-thiouridine biosynthesis bifunctional protein MnmC (666 aa).

Positions 1–253 (MSSPFVPIIT…KRHMICAHYE (253 aa)) are tRNA (mnm(5)s(2)U34)-methyltransferase. Residues 283-666 (VGGGLAGCFI…FLRKKIIQGP (384 aa)) are FAD-dependent cmnm(5)s(2)U34 oxidoreductase.

It in the N-terminal section; belongs to the methyltransferase superfamily. tRNA (mnm(5)s(2)U34)-methyltransferase family. In the C-terminal section; belongs to the DAO family. The cofactor is FAD.

Its subcellular location is the cytoplasm. The catalysed reaction is 5-aminomethyl-2-thiouridine(34) in tRNA + S-adenosyl-L-methionine = 5-methylaminomethyl-2-thiouridine(34) in tRNA + S-adenosyl-L-homocysteine + H(+). In terms of biological role, catalyzes the last two steps in the biosynthesis of 5-methylaminomethyl-2-thiouridine (mnm(5)s(2)U) at the wobble position (U34) in tRNA. Catalyzes the FAD-dependent demodification of cmnm(5)s(2)U34 to nm(5)s(2)U34, followed by the transfer of a methyl group from S-adenosyl-L-methionine to nm(5)s(2)U34, to form mnm(5)s(2)U34. The sequence is that of tRNA 5-methylaminomethyl-2-thiouridine biosynthesis bifunctional protein MnmC from Legionella pneumophila subsp. pneumophila (strain Philadelphia 1 / ATCC 33152 / DSM 7513).